Consider the following 466-residue polypeptide: Glutamate decarboxylase alpha (466 aa).

T62 and N83 together coordinate substrate. Pyridoxal 5'-phosphate is bound by residues 126–127 (SS), T212, and H275. The residue at position 276 (K276) is an N6-(pyridoxal phosphate)lysine.

Belongs to the group II decarboxylase family. Homohexamer. The cofactor is pyridoxal 5'-phosphate.

It carries out the reaction L-glutamate + H(+) = 4-aminobutanoate + CO2. In terms of biological role, converts glutamate to gamma-aminobutyrate (GABA), consuming one intracellular proton in the reaction. The gad system helps to maintain a near-neutral intracellular pH when cells are exposed to extremely acidic conditions. The ability to survive transit through the acidic conditions of the stomach is essential for successful colonization of the mammalian host by commensal and pathogenic bacteria. This Escherichia coli O6:H1 (strain CFT073 / ATCC 700928 / UPEC) protein is Glutamate decarboxylase alpha (gadA).